Reading from the N-terminus, the 162-residue chain is uncharacterized protein (162 aa).

Residues 5-25 (IIILFLFTAILCSITLCGCIS) form a helical membrane-spanning segment.

It is found in the membrane. This is an uncharacterized protein from Methanocaldococcus jannaschii (strain ATCC 43067 / DSM 2661 / JAL-1 / JCM 10045 / NBRC 100440) (Methanococcus jannaschii).